Consider the following 44-residue polypeptide: Phycoerythrin alpha-1 chain (44 aa).

The disordered stretch occupies residues 1 to 44 (AMDKSAKAPQITIFDHRGCSRAPKSETGGTATKDDQMMVKVSQV). Residue K4 is modified to 5-hydroxylysine. 15,16-dihydrobiliverdin contacts are provided by C19 and R21. Residues 24 to 26 (KSE) are 15,16-dihydrobiliverdin chromophore. K40 contacts 15,16-dihydrobiliverdin.

It belongs to the phycoerythrin family. As to quaternary structure, heterotetramer of 2 different alpha chains and 2 identical beta chains. The subunit composition could comprise of any combination of 2 out of 4 different alpha units with an invariant beta unit. Post-translationally, contains one covalently linked 15,16-dihydrobiliverdin chromophore.

Its subcellular location is the plastid. The protein localises to the chloroplast thylakoid membrane. Functionally, light-harvesting photosynthetic tetrapyrrole chromophore-protein from the phycobiliprotein complex. In Rhodomonas sp. (strain CS 24) (Chroomonas sp. (strain CS24)), this protein is Phycoerythrin alpha-1 chain (cpeA1).